An 861-amino-acid polypeptide reads, in one-letter code: DNA mismatch repair protein MutS (861 aa).

609-616 (GPNMAGKS) is a binding site for ATP.

The protein belongs to the DNA mismatch repair MutS family.

In terms of biological role, this protein is involved in the repair of mismatches in DNA. It is possible that it carries out the mismatch recognition step. This protein has a weak ATPase activity. The chain is DNA mismatch repair protein MutS from Borrelia hermsii (strain HS1 / DAH).